The chain runs to 476 residues: uncharacterized protein (476 aa).

An N-terminal signal peptide occupies residues 1–24; that stretch reads MIRKSATGVIVALAVIWGGGTWYT.

It to E.coli YdgA and H.influenzae HI_1236.

This is an uncharacterized protein from Escherichia coli (strain K12).